The sequence spans 193 residues: dCTP deaminase (193 aa).

Residues 110 to 115 (RSSLAR), Asp128, 136 to 138 (VLE), Tyr171, Lys178, and Gln182 each bind dCTP. Glu138 acts as the Proton donor/acceptor in catalysis.

The protein belongs to the dCTP deaminase family. In terms of assembly, homotrimer.

The enzyme catalyses dCTP + H2O + H(+) = dUTP + NH4(+). Its pathway is pyrimidine metabolism; dUMP biosynthesis; dUMP from dCTP (dUTP route): step 1/2. In terms of biological role, catalyzes the deamination of dCTP to dUTP. This is dCTP deaminase from Escherichia coli (strain K12 / MC4100 / BW2952).